The following is a 1085-amino-acid chain: Solute carrier family 12 member 4 (1085 aa).

At 1-119 (MPHFTVVPVD…RRAAKAPSMG (119 aa)) the chain is on the cytoplasmic side. 4 positions are modified to phosphoserine: Ser24, Ser47, Ser81, and Ser88. A discontinuously helical transmembrane segment spans residues 120 to 141 (TLMGVYLPCLQNIFGVILFLRL). Asn131 and Ile132 together coordinate K(+). At 142–149 (TWMVGTAG) the chain is on the extracellular side. A helical transmembrane segment spans residues 150–172 (VLQALLIVLICCCCTLLTAISMS). Residues 173–196 (AIATNGVVPAGGSYFMISRSLGPE) are Cytoplasmic-facing. A helical transmembrane segment spans residues 197 to 225 (FGGAVGLCFYLGTTFAAAMYILGAIEILL). Tyr216 is a binding site for K(+). At 226-248 (TYIAPPAAIFYPSGTHDMSSATL) the chain is on the extracellular side. The next 2 membrane-spanning stretches (helical) occupy residues 249–271 (NNMR…VGVK) and 272–297 (YVNK…GGIK). The Extracellular portion of the chain corresponds to 298–419 (SIFDPPVFPV…LYVVADIATS (122 aa)). A disulfide bridge links Cys308 with Cys323. Asn312, Asn331, and Asn347 each carry an N-linked (GlcNAc...) asparagine glycan. The cysteines at positions 343 and 353 are disulfide-linked. The helical transmembrane segment at 420–440 (FTVLVGIFFPSVTGIMAGSNR) threads the bilayer. K(+) is bound by residues Pro429 and Thr432. 3 residues coordinate chloride: Gly433, Ile434, and Met435. The Cytoplasmic portion of the chain corresponds to 441–450 (SGDLRDAQKS). A helical membrane pass occupies residues 451-473 (IPVGTILAIVTTSLVYFSSVILF). Topologically, residues 474–504 (GACIEGVVLRDKYGDGVSRNLVVGTLAWPSP) are extracellular. Residues 505–531 (WVIVVGSFFSTCGAGLQSLTGAPRLLQ) traverse the membrane as a helical segment. At 532-554 (AIAKDNIIPFLRVFGHGKANGEP) the chain is on the cytoplasmic side. 2 consecutive transmembrane segments (helical) span residues 555–575 (TWAL…ASLD) and 576–598 (MVAP…ACAV). Position 589 (Tyr589) interacts with chloride. The Cytoplasmic portion of the chain corresponds to 599-612 (QTLLRTPNWRPRFK). 2 helical membrane passes run 613 to 635 (YYHW…VSSW) and 636 to 651 (YYAL…IYKY). The Cytoplasmic portion of the chain corresponds to 652 to 1085 (IEYQGAEKEW…GGREVITIYS (434 aa)). Residues 665 to 681 (IRGLSLSAARYALLRLE) form a scissor helix region. ATP contacts are provided by Leu697, Lys699, Lys707, Tyr708, and Val730. Ser734 is modified (phosphoserine). Gly794, Trp795, and Tyr797 together coordinate ATP. Phosphoserine occurs at positions 916 and 967. Thr983 carries the post-translational modification Phosphothreonine. At Ser1050 the chain carries Phosphoserine.

The protein belongs to the SLC12A transporter family. K/Cl co-transporter subfamily. As to quaternary structure, homodimer; adopts a domain-swap conformation at the scissor helices connecting the transmembrane domain and C-terminal domain. Heterodimer with other K-Cl cotransporters. Phosphorylated, phosphorylation may regulate transporter activity. In terms of tissue distribution, detected in embryo, adult heart, erythrocytes, brain, kidney, stomach, ovary, testis and liver.

Its subcellular location is the cell membrane. It catalyses the reaction K(+)(in) + chloride(in) = K(+)(out) + chloride(out). Inhibited by WNK3. Mediates electroneutral potassium-chloride cotransport when activated by cell swelling. May contribute to cell volume homeostasis in single cells. May be involved in the regulation of basolateral Cl(-) exit in NaCl absorbing epithelia. The chain is Solute carrier family 12 member 4 (Slc12a4) from Mus musculus (Mouse).